Consider the following 45-residue polypeptide: Large ribosomal subunit protein bL34 (45 aa).

The segment covering 1-10 has biased composition (basic and acidic residues); that stretch reads MTKRTLEGTN. The disordered stretch occupies residues 1 to 27; sequence MTKRTLEGTNRKRKRTSGFRARMRSAT. The segment covering 11 to 23 has biased composition (basic residues); the sequence is RKRKRTSGFRARM.

Belongs to the bacterial ribosomal protein bL34 family.

This Synechococcus elongatus (strain ATCC 33912 / PCC 7942 / FACHB-805) (Anacystis nidulans R2) protein is Large ribosomal subunit protein bL34.